Consider the following 448-residue polypeptide: Homogentisate 1,2-dioxygenase (448 aa).

Catalysis depends on His-303, which acts as the Proton acceptor. Fe cation is bound by residues His-346 and Glu-352. Homogentisate contacts are provided by Tyr-361 and His-382. His-382 is a Fe cation binding site.

It belongs to the homogentisate dioxygenase family. In terms of assembly, hexamer; dimer of trimers. The cofactor is Fe cation.

The enzyme catalyses homogentisate + O2 = 4-maleylacetoacetate + H(+). It participates in amino-acid degradation; L-phenylalanine degradation; acetoacetate and fumarate from L-phenylalanine: step 4/6. In terms of biological role, involved in the catabolism of homogentisate (2,5-dihydroxyphenylacetate or 2,5-OH-PhAc), a central intermediate in the degradation of phenylalanine and tyrosine. Catalyzes the oxidative ring cleavage of the aromatic ring of homogentisate to yield maleylacetoacetate. This chain is Homogentisate 1,2-dioxygenase, found in Rhodopseudomonas palustris (strain ATCC BAA-98 / CGA009).